The following is a 444-amino-acid chain: DNA primase DnaG (444 aa).

Positions 173–250 constitute a Toprim domain; sequence DAILIVEGRS…YVTRAPRGLE (78 aa). Mg(2+)-binding residues include Glu179, Asp221, and Asp223. A disordered region spans residues 302–354; sequence VTSSVNKTDKYSQKNESKQFKQQKNENKQVKDNSKEKTQKSTEKHNETEETHL. The segment covering 308–354 has biased composition (basic and acidic residues); the sequence is KTDKYSQKNESKQFKQQKNENKQVKDNSKEKTQKSTEKHNETEETHL.

It belongs to the archaeal DnaG primase family. As to quaternary structure, forms a ternary complex with MCM helicase and DNA. Component of the archaeal exosome complex. It depends on Mg(2+) as a cofactor.

The enzyme catalyses ssDNA + n NTP = ssDNA/pppN(pN)n-1 hybrid + (n-1) diphosphate.. RNA polymerase that catalyzes the synthesis of short RNA molecules used as primers for DNA polymerase during DNA replication. Also part of the exosome, which is a complex involved in RNA degradation. Acts as a poly(A)-binding protein that enhances the interaction between heteromeric, adenine-rich transcripts and the exosome. This is DNA primase DnaG from Methanosphaera stadtmanae (strain ATCC 43021 / DSM 3091 / JCM 11832 / MCB-3).